A 93-amino-acid polypeptide reads, in one-letter code: Large ribosomal subunit protein uL23 (93 aa).

This sequence belongs to the universal ribosomal protein uL23 family. As to quaternary structure, part of the 50S ribosomal subunit. Contacts protein L29, and trigger factor when it is bound to the ribosome.

Its function is as follows. One of the early assembly proteins it binds 23S rRNA. One of the proteins that surrounds the polypeptide exit tunnel on the outside of the ribosome. Forms the main docking site for trigger factor binding to the ribosome. This is Large ribosomal subunit protein uL23 from Campylobacter jejuni subsp. doylei (strain ATCC BAA-1458 / RM4099 / 269.97).